Here is a 132-residue protein sequence, read N- to C-terminus: NADH-quinone oxidoreductase subunit A 2 (132 aa).

The next 3 helical transmembrane spans lie at 9–29 (AWAF…MLGL), 66–86 (LVAM…LWAV), and 93–113 (WAGF…LFYL).

Belongs to the complex I subunit 3 family. As to quaternary structure, NDH-1 is composed of 13 different subunits. Subunits NuoA, H, J, K, L, M, N constitute the membrane sector of the complex.

The protein localises to the cell inner membrane. It carries out the reaction a quinone + NADH + 5 H(+)(in) = a quinol + NAD(+) + 4 H(+)(out). NDH-1 shuttles electrons from NADH, via FMN and iron-sulfur (Fe-S) centers, to quinones in the respiratory chain. The immediate electron acceptor for the enzyme in this species is believed to be ubiquinone. Couples the redox reaction to proton translocation (for every two electrons transferred, four hydrogen ions are translocated across the cytoplasmic membrane), and thus conserves the redox energy in a proton gradient. This Pseudomonas paraeruginosa (strain DSM 24068 / PA7) (Pseudomonas aeruginosa (strain PA7)) protein is NADH-quinone oxidoreductase subunit A 2.